The sequence spans 268 residues: Microtubule-associated protein RP/EB family member 1 (268 aa).

N-acetylalanine is present on alanine 2. Residues 14 to 116 (NLSRHDMLAW…FVQWFKKFFD (103 aa)) enclose the Calponin-homology (CH) domain. Lysine 66 bears the N6-crotonyllysine mark. A Phosphotyrosine modification is found at tyrosine 124. Residues 124–268 (YDPVAARQGQ…GGPQEEQEEY (145 aa)) form an interaction with MTUS2/TIP150 region. A compositionally biased stretch (low complexity) spans 147 to 160 (NKPKKPLSSSSAAP). A disordered region spans residues 147 to 184 (NKPKKPLSSSSAAPQRPITTHRTTATPKAGPGVVRKNP). Serine 155 carries the phosphoserine modification. A compositionally biased stretch (polar residues) spans 163–172 (PITTHRTTAT). In terms of domain architecture, EB1 C-terminal spans 185–255 (GVGNGDDEAA…LYATDEGFVI (71 aa)). Residues 185-268 (GVGNGDDEAA…GGPQEEQEEY (84 aa)) are interaction with CDK5RAP2. An interaction with APC region spans residues 206–211 (TVEDLE). A DCTN1-binding region spans residues 208 to 268 (EDLEKERDFY…GGPQEEQEEY (61 aa)). Lysine 220 is modified (N6-acetyllysine). The tract at residues 220-242 (KLRNIELICQENEGENNPVLQRI) is APC-binding. The interaction with SKA1 stretch occupies residues 232-255 (EGENNPVLQRIVDILYATDEGFVI).

This sequence belongs to the MAPRE family. Homodimer. Heterodimer with MAPRE3. Interacts with DCTN1, DCTN2, TERF1 and dynein intermediate chain. Interaction with DIAPH1 and DIAPH2. Interacts (via C-terminal residues 206-211) with APC (via C-terminal residues 2674-2845); the interaction inhibits association with and bundling of F-actin. Interacts with CLASP2, DST, KIF2C and STIM1; probably required for their targeting to the growing microtubule plus ends. Interacts with MTUS2; interaction is direct and probably targets MTUS2 to microtubules. Interacts (via C-terminus) with SKA1 (via SXIP motif); the interaction is direct and stabilizes the kinetochore-microtubule attachment of the SKA1 complex. Interacts with APC2. Interacts with CLASP1. Interacts with CDK5RAP2. Interacts with MACF1. Interacts with RABL2/RABL2A; binds preferentially to GTP-bound RABL2. Interacts with KCNAB2. Interacts (via C-terminus) with CLIP1. Interacts with SLAIN2 and SLAIN1. Interacts with KIF18B; this interaction is required for efficient accumulation of KIF18B at microtubule plus ends. Interacts with MISP. Interacts with KNSTRN. Interacts with NCKAP5L. Interacts with CAMSAP2. Interacts with PDE4DIP isoform 13/MMG8/SMYLE; this interaction is required for its recruitment to the Golgi apparatus. Forms a pericentrosomal complex with AKAP9, CDK5RAP2 and PDE4DIP isoform 13/MMG8/SMYLE; within this complex, MAPRE1 binding to CDK5RAP2 may be mediated by PDE4DIP. Interacts with AKNA. Interacts with GAS2L1, GAS2L2, and GAS2L3. Acetylation at Lys-220 by KAT2B/PCAF promotes dynamic kinetochore-microtubule interactions in early mitosis. Post-translationally, crotonylated by KAT5 during mitosis, promoting astral microtubule plasticity and dynamic connection between astral microtubules and the cortex during mitotic chromosome segregation, thereby ensuring accurate spindle positioning in mitosis. Decrotonylated by HDAC3.

It localises to the cytoplasm. The protein resides in the cytoskeleton. Its subcellular location is the microtubule organizing center. The protein localises to the centrosome. It is found in the golgi apparatus. It localises to the spindle. The protein resides in the spindle pole. Plus-end tracking protein (+TIP) that binds to the plus-end of microtubules and regulates the dynamics of the microtubule cytoskeleton. Recruits other +TIP proteins to microtubules by binding to a conserved Ser-X-Leu-Pro (SXLP) motif in their polypeptide chains. Promotes cytoplasmic microtubule nucleation and elongation. Involved in mitotic spindle positioning by stabilizing microtubules and promoting dynamic connection between astral microtubules and the cortex during mitotic chromosome segregation. Assists chromosome alignment in metaphase by recruiting the SKA complex to the spindle and stabilizing its interactions with microtubule bundles (K-fibers). Also acts as a regulator of minus-end microtubule organization: interacts with the complex formed by AKAP9 and PDE4DIP, leading to recruit CAMSAP2 to the Golgi apparatus, thereby tethering non-centrosomal minus-end microtubules to the Golgi, an important step for polarized cell movement. Promotes elongation of CAMSAP2-decorated microtubule stretches on the minus-end of microtubules. Acts as a regulator of autophagosome transport via interaction with CAMSAP2. Functions downstream of Rho GTPases and DIAPH1 in stable microtubule formation. May play a role in cell migration. This Bos taurus (Bovine) protein is Microtubule-associated protein RP/EB family member 1 (MAPRE1).